The chain runs to 424 residues: CinA-like protein (424 aa).

The protein belongs to the CinA family.

This chain is CinA-like protein, found in Prochlorococcus marinus (strain AS9601).